Reading from the N-terminus, the 542-residue chain is Apolipoprotein N-acyltransferase (542 aa).

The next 6 membrane-spanning stretches (helical) occupy residues Ala26 to Val46, Ile54 to Leu74, Leu89 to Phe109, Tyr113 to Tyr133, Trp163 to Phe183, and Phe187 to Tyr207. In terms of domain architecture, CN hydrolase spans Leu220 to Val499. Glu264 acts as the Proton acceptor in catalysis. Lys349 is an active-site residue. Cys404 functions as the Nucleophile in the catalytic mechanism. Residues Phe509–Phe529 traverse the membrane as a helical segment.

It belongs to the CN hydrolase family. Apolipoprotein N-acyltransferase subfamily.

It localises to the cell inner membrane. The catalysed reaction is N-terminal S-1,2-diacyl-sn-glyceryl-L-cysteinyl-[lipoprotein] + a glycerophospholipid = N-acyl-S-1,2-diacyl-sn-glyceryl-L-cysteinyl-[lipoprotein] + a 2-acyl-sn-glycero-3-phospholipid + H(+). Its pathway is protein modification; lipoprotein biosynthesis (N-acyl transfer). Catalyzes the phospholipid dependent N-acylation of the N-terminal cysteine of apolipoprotein, the last step in lipoprotein maturation. In Chlamydia muridarum (strain MoPn / Nigg), this protein is Apolipoprotein N-acyltransferase.